Consider the following 180-residue polypeptide: D(1A) dopamine receptor (180 aa).

A helical transmembrane segment spans residues N1–I10. Residues R11–N21 lie on the Cytoplasmic side of the membrane. Residues F22 to A48 form a helical membrane-spanning segment. Residues G49 to C57 are Extracellular-facing. A disulfide bond links C57 and C147. Residues N58–V80 traverse the membrane as a helical segment. At D81 to K99 the chain is on the cytoplasmic side. The chain crosses the membrane as a helical span at residues A100–W124. Residues H125–R153 lie on the Extracellular side of the membrane. N-linked (GlcNAc...) asparagine glycosylation is present at N136. A helical transmembrane segment spans residues T154 to H179. R180 is a topological domain (cytoplasmic).

This sequence belongs to the G-protein coupled receptor 1 family. Interacts with DNAJC14 via its C-terminus. Interacts with DRD2. Interacts with DORIP1.

The protein localises to the cell membrane. It is found in the endoplasmic reticulum membrane. It localises to the cell projection. Its subcellular location is the cilium membrane. Dopamine receptor whose activity is mediated by G proteins which activate adenylyl cyclase. The protein is D(1A) dopamine receptor (DRD1) of Oryctolagus cuniculus (Rabbit).